An 85-amino-acid chain; its full sequence is Protein MANBAL (85 aa).

Residues 24–44 (YGLFLGAIFQLICVLAIIVPI) form a helical membrane-spanning segment. A compositionally biased stretch (basic and acidic residues) spans 49-64 (EAEAEQAEPRSAEGPK). A disordered region spans residues 49–85 (EAEAEQAEPRSAEGPKKPKAAIASTNKRPKKETKKKR). The segment covering 75–85 (KRPKKETKKKR) has biased composition (basic residues).

Belongs to the UPF0239 family.

It is found in the membrane. The polypeptide is Protein MANBAL (Manbal) (Mus musculus (Mouse)).